The sequence spans 359 residues: 1-deoxy-D-xylulose 5-phosphate reductoisomerase (359 aa).

Positions 7, 8, 9, 10, 31, 32, 33, and 111 each coordinate NADPH. Lysine 112 contributes to the 1-deoxy-D-xylulose 5-phosphate binding site. Glutamate 113 is an NADPH binding site. Residue aspartate 131 coordinates Mn(2+). 4 residues coordinate 1-deoxy-D-xylulose 5-phosphate: serine 132, glutamate 133, serine 155, and histidine 178. A Mn(2+)-binding site is contributed by glutamate 133. Glycine 184 is a binding site for NADPH. 1-deoxy-D-xylulose 5-phosphate contacts are provided by serine 191, asparagine 196, lysine 197, and glutamate 200. Residue glutamate 200 coordinates Mn(2+).

Belongs to the DXR family. It depends on Mg(2+) as a cofactor. The cofactor is Mn(2+).

It carries out the reaction 2-C-methyl-D-erythritol 4-phosphate + NADP(+) = 1-deoxy-D-xylulose 5-phosphate + NADPH + H(+). It participates in isoprenoid biosynthesis; isopentenyl diphosphate biosynthesis via DXP pathway; isopentenyl diphosphate from 1-deoxy-D-xylulose 5-phosphate: step 1/6. Its function is as follows. Catalyzes the NADPH-dependent rearrangement and reduction of 1-deoxy-D-xylulose-5-phosphate (DXP) to 2-C-methyl-D-erythritol 4-phosphate (MEP). The protein is 1-deoxy-D-xylulose 5-phosphate reductoisomerase of Campylobacter lari (strain RM2100 / D67 / ATCC BAA-1060).